Consider the following 103-residue polypeptide: Large ribosomal subunit protein bL25 (103 aa).

This sequence belongs to the bacterial ribosomal protein bL25 family. As to quaternary structure, part of the 50S ribosomal subunit; part of the 5S rRNA/L5/L18/L25 subcomplex. Contacts the 5S rRNA. Binds to the 5S rRNA independently of L5 and L18.

Its function is as follows. This is one of the proteins that binds to the 5S RNA in the ribosome where it forms part of the central protuberance. The sequence is that of Large ribosomal subunit protein bL25 from Blochmanniella floridana.